A 188-amino-acid polypeptide reads, in one-letter code: Probable DNA-directed RNA polymerase subunit delta (188 aa).

The HTH HARE-type domain occupies 14 to 83 (LSMIEVARAI…GDNKWGLRSW (70 aa)). Residues 117 to 188 (GDEDAIDYSD…EDDEDDEEEE (72 aa)) form a disordered region.

The protein belongs to the RpoE family. In terms of assembly, RNAP is composed of a core of 2 alpha, a beta and a beta' subunits. The core is associated with a delta subunit and one of several sigma factors.

Its function is as follows. Participates in both the initiation and recycling phases of transcription. In the presence of the delta subunit, RNAP displays an increased specificity of transcription, a decreased affinity for nucleic acids, and an increased efficiency of RNA synthesis because of enhanced recycling. The protein is Probable DNA-directed RNA polymerase subunit delta of Streptococcus uberis (strain ATCC BAA-854 / 0140J).